The following is a 324-amino-acid chain: bZIP transcription factor 46 (324 aa).

Residues 106 to 127 form a disordered region; that stretch reads LGGSDDEDPAAAAAAAAPAQRQ. A compositionally biased stretch (low complexity) spans 115 to 124; that stretch reads AAAAAAAAPA. One can recognise a bZIP domain in the interval 242 to 287; the sequence is VERRQRRMIKNRESAARSRARKQAYIMELEAEVAKLKEQKAELQKK. The tract at residues 244–263 is basic motif; that stretch reads RRQRRMIKNRESAARSRARK. Residues 270–284 are leucine-zipper; that stretch reads LEAEVAKLKEQKAEL.

As to quaternary structure, interacts with MODD. Interacts with SAPK2, SAPK6 and SAPK9. In terms of processing, phosphorylated on serine and threonine residues by SAPK2, SAPK6 and SAPK9. Phosphorylation is required for full transactivation activity. In terms of tissue distribution, expressed in roots, shoots, leaves, flag leaves, stems, flowers and panicles. Widely expressed.

It localises to the nucleus. Its function is as follows. Transcription factor involved in abscisic acid (ABA) signaling pathway. Transcription factor activity is fully activated by ABA. Acts as a positive regulator of the expression of abiotic stress-responsive genes through an ABA-dependent signaling pathway. Acts as a positive regulator of ABA signaling and drought stress tolerance. Plays an important role in ABA and auxin responses. Involved in ABA signaling and stress responses by directly binding to the ABA-responsive element (ABRE)-containing genes, especially WRKY family genes. Modulates response to auxin. Suppresses auxin signaling by targeting ABRE-containing genes related to auxin metabolism or signaling. The polypeptide is bZIP transcription factor 46 (Oryza sativa subsp. japonica (Rice)).